The chain runs to 353 residues: MTIALGKFTKDQNDLFDIMDDWLRRDRFVFVGWSGLLLFPCAYFAVGGWFTGTTFVTSWYTHGLASSYLEGCNFLTAAVSTPANSLAHSLLLLWGPEAQGDFTRWCQLGGLWTFVALHGAFGLIGFMLRQFELARSVQLRPYNAIAFSGPIAVFVSVFLIYPLGQSGWFFAPSFGVAAIFRFILFFQGFHNWTLNPFHMMGVAGVLGAALLCAIHGATVENTLFEDGDGANTFRAFNPTQAEETYSMVTANRFWSQIFGVAFSNKRWLHFFMLFVPVTGLWMSALGVVGLALNLRAYDFVSQEIRAAEDPEFETFYTKNILLNEGIRAWMAAQDQPHENLIFPEEVLPRGNAL.

Thr2 carries the post-translational modification N-acetylthreonine. Position 2 is a phosphothreonine (Thr2). Residues 41–61 (CAYFAVGGWFTGTTFVTSWYT) form a helical membrane-spanning segment. Residue His118 coordinates chlorophyll a. Residues 125–141 (GFMLRQFELARSVQLRP) form a helical membrane-spanning segment. Pheophytin a contacts are provided by Gln130 and Asn143. The helical transmembrane segment at 153–166 (VFVSVFLIYPLGQS) threads the bilayer. A chlorophyll a-binding site is contributed by His198. Residues 208-228 (AALLCAIHGATVENTLFEDGD) traverse the membrane as a helical segment. His215 and Phe262 together coordinate a plastoquinone. His215 contacts Fe cation. His269 serves as a coordination point for Fe cation. The chain crosses the membrane as a helical span at residues 279 to 295 (GLWMSALGVVGLALNLR).

It belongs to the reaction center PufL/M/PsbA/D family. PSII is composed of 1 copy each of membrane proteins PsbA, PsbB, PsbC, PsbD, PsbE, PsbF, PsbH, PsbI, PsbJ, PsbK, PsbL, PsbM, PsbT, PsbX, PsbY, PsbZ, Psb30/Ycf12, at least 3 peripheral proteins of the oxygen-evolving complex and a large number of cofactors. It forms dimeric complexes. The D1/D2 heterodimer binds P680, chlorophylls that are the primary electron donor of PSII, and subsequent electron acceptors. It shares a non-heme iron and each subunit binds pheophytin, quinone, additional chlorophylls, carotenoids and lipids. There is also a Cl(-1) ion associated with D1 and D2, which is required for oxygen evolution. The PSII complex binds additional chlorophylls, carotenoids and specific lipids. serves as cofactor.

The protein resides in the plastid. It localises to the chloroplast thylakoid membrane. The catalysed reaction is 2 a plastoquinone + 4 hnu + 2 H2O = 2 a plastoquinol + O2. In terms of biological role, photosystem II (PSII) is a light-driven water:plastoquinone oxidoreductase that uses light energy to abstract electrons from H(2)O, generating O(2) and a proton gradient subsequently used for ATP formation. It consists of a core antenna complex that captures photons, and an electron transfer chain that converts photonic excitation into a charge separation. The D1/D2 (PsbA/PsbD) reaction center heterodimer binds P680, the primary electron donor of PSII as well as several subsequent electron acceptors. D2 is needed for assembly of a stable PSII complex. The chain is Photosystem II D2 protein from Cicer arietinum (Chickpea).